The primary structure comprises 714 residues: Transcription factor SFL2 (714 aa).

The DNA-binding element occupies 15-134 (AFVHKLYTML…LVYIKRRSSS (120 aa)). Disordered regions lie at residues 187–467 (YYQQ…VGVT), 565–658 (STSV…NNTN), and 670–714 (SHSQ…NMNK). Composition is skewed to pro residues over residues 193–207 (GQVP…PPHQ) and 223–235 (QPPP…PPQP). Residues 266–275 (LDQTQPLSYT) are compositionally biased toward polar residues. The segment covering 276–285 (PQLEYQQQQY) has biased composition (low complexity). Positions 286 to 296 (PQPPLPPPPPQ) are enriched in pro residues. Polar residues-rich tracts occupy residues 310–321 (DNLSRPSPNEQH) and 354–372 (SEGS…LNNE). Residues 376–389 (ESSTSSSSTTVTST) show a composition bias toward low complexity. Composition is skewed to polar residues over residues 413–435 (SRMN…TQNG) and 444–461 (LIPS…TGTD). Residues 574-591 (GPFSTSTSTSTTSPTLSS) are compositionally biased toward low complexity. Positions 599-608 (EPQNSTIANG) are enriched in polar residues. Low complexity-rich tracts occupy residues 609–641 (TSIR…RQLS) and 648–658 (QQQQQPNNNTN). The span at 703–714 (SKSDDDTDNMNK) shows a compositional bias: basic and acidic residues.

The protein belongs to the HSF family.

Its subcellular location is the nucleus. Its function is as follows. Transcription factor that plays a role of activator of filamentous growth and which is involved in invasive growth at a high temperature. Required for human oral epithelium colonization and damage. Promotes filamentous growth in EFG1- and FLO8-dependent manners. Antagonizes functions of SFL1. The protein is Transcription factor SFL2 (SFL2) of Candida albicans (strain SC5314 / ATCC MYA-2876) (Yeast).